We begin with the raw amino-acid sequence, 246 residues long: Acetoacetate decarboxylase (246 aa).

The active-site Schiff-base intermediate with acetoacetate is Lys116.

The protein belongs to the ADC family.

The enzyme catalyses acetoacetate + H(+) = acetone + CO2. Its function is as follows. Catalyzes the conversion of acetoacetate to acetone and carbon dioxide. The sequence is that of Acetoacetate decarboxylase from Burkholderia multivorans (strain ATCC 17616 / 249).